The sequence spans 100 residues: NADH-quinone oxidoreductase subunit K (100 aa).

The next 3 helical transmembrane spans lie at 2–22 (VTLN…LVGV), 28–48 (LLML…GLVA), and 63–83 (FFII…LILW).

This sequence belongs to the complex I subunit 4L family. NDH-1 is composed of 14 different subunits. Subunits NuoA, H, J, K, L, M, N constitute the membrane sector of the complex.

It is found in the cell inner membrane. The enzyme catalyses a quinone + NADH + 5 H(+)(in) = a quinol + NAD(+) + 4 H(+)(out). In terms of biological role, NDH-1 shuttles electrons from NADH, via FMN and iron-sulfur (Fe-S) centers, to quinones in the respiratory chain. The immediate electron acceptor for the enzyme in this species is believed to be ubiquinone. Couples the redox reaction to proton translocation (for every two electrons transferred, four hydrogen ions are translocated across the cytoplasmic membrane), and thus conserves the redox energy in a proton gradient. The sequence is that of NADH-quinone oxidoreductase subunit K from Wolinella succinogenes (strain ATCC 29543 / DSM 1740 / CCUG 13145 / JCM 31913 / LMG 7466 / NCTC 11488 / FDC 602W) (Vibrio succinogenes).